The sequence spans 237 residues: Ferritin, mitochondrial (237 aa).

A mitochondrion-targeting transit peptide spans 1 to 49; that stretch reads MLSCFWFFSKHISSALMSLPRVLHRFTAPQCLASRYPLGPLLASPRRLL. Residues 66 to 215 enclose the Ferritin-like diiron domain; it reads QNFHPDSEAA…DHVHNLVTMG (150 aa). Positions 83, 118, 121, 163, and 197 each coordinate Fe cation.

This sequence belongs to the ferritin family. As to quaternary structure, homooligomer of 24 subunits. The functional molecule is roughly spherical and contains a central cavity into which the polymeric mineral iron core is deposited.

The protein localises to the mitochondrion. The enzyme catalyses 4 Fe(2+) + O2 + 4 H(+) = 4 Fe(3+) + 2 H2O. In terms of biological role, catalyzes the oxidation of ferrous iron(II) to ferric iron(III) and stores iron in a soluble, non-toxic, readily available form. Important for iron homeostasis. Iron is taken up in the ferrous form and deposited as ferric hydroxides after oxidation. The chain is Ferritin, mitochondrial from Mus musculus (Mouse).